The sequence spans 106 residues: Protein translation factor SUI1 homolog (106 aa).

This sequence belongs to the SUI1 family.

Functionally, additional factor that functions in concert with eIF-2 and the initiator tRNA in directing the ribosome to the proper start site of translation. The polypeptide is Protein translation factor SUI1 homolog (Acanthamoeba polyphaga mimivirus (APMV)).